A 660-amino-acid polypeptide reads, in one-letter code: Baseplate wedge protein gp6 (660 aa).

It belongs to the T4likevirus baseplate wedge protein gp6 family. Homodimer; each gp6 molecule in the ring interacts with its two neighbors, forming an N-terminal dimer with one and a C-terminal dimer with the other. Heterotrimer with gp7; gp6 is part of a (gp6)2-gp7 heterotrimeric molecule. The (gp6)2-gp7 heterotrimeric molecule further interacts with gp25 and gp53; the gp25-(gp6)2-gp7 module is involved in sheath contraction. Part of the baseplate macromolecular complex which consists of gp5, gp5.4, gp27 (central spike complex); gp6, gp25, gp53 (inner baseplate); gp7, gp8 (intermediate baseplate); gp9, gp10, gp11, gp12 (peripheral); gp48 and gp54 (proximal region of the tail tube).

It localises to the virion. In terms of biological role, baseplate protein that is located next to the tail tube (inner baseplate). Involved in the tail assembly. The gp25-(gp6)2-gp7 module is involved in sheath contraction. This chain is Baseplate wedge protein gp6 (6), found in Escherichia coli (Bacteriophage T4).